The sequence spans 321 residues: Leucine-rich repeat-containing protein 46 (321 aa).

4 LRR repeats span residues 45–66 (ELQTVRLDREGITTIRNLEGLK), 67–88 (NLHSLYLQGNKIQQIENLACVP), 89–110 (SLRFLSLAGNQIRQVENLLDLP), and 111–132 (CLQFLDLSENLIETLKLDEFPQ). The LRRCT domain maps to 142 to 184 (NSCTNQDSYRELVIEALPLLLDLDGQPVMERWISDEEDEASSE). 2 positions are modified to phosphoserine: S175 and S182. A coiled-coil region spans residues 198 to 222 (RGFLKELEQELSRHREHRQQAALTQ). Residues 235-321 (NLPLLPGVPM…TKTMAKRSKK (87 aa)) are disordered.

The protein localises to the cell projection. The protein resides in the cilium. Its subcellular location is the flagellum. Functionally, required for normal spermatogenesis and male fertility. Plays an important role in sperm flagellum biogenesis. This is Leucine-rich repeat-containing protein 46 (LRRC46) from Macaca fascicularis (Crab-eating macaque).